A 152-amino-acid chain; its full sequence is Fibroblast growth factor 1 (152 aa).

Alanine 2 carries the N-acetylalanine modification. Residues 2–15 (AEGEITTFTALTEK) constitute a propeptide that is removed on maturation. Residue asparagine 33 coordinates heparin. The tract at residues 127–143 (KKNGSCKRGPRTHYGQK) is heparin-binding.

Belongs to the heparin-binding growth factors family. In terms of assembly, monomer. Homodimer. Interacts with FGFR1, FGFR2, FGFR3 and FGFR4. Affinity between fibroblast growth factors (FGFs) and their receptors is increased by heparan sulfate glycosaminoglycans that function as coreceptors. Found in a complex with FGFBP1, FGF1 and FGF2. Interacts with FGFBP1. Part of a Cu(2+)-dependent multiprotein aggregate containing FGF1, S100A13 and SYT1. Interacts with SYT1. Interacts with S100A13. Interacts with LRRC59. Interacts with CSNKA, CSNKB and FIBP. While binding with LRRC59, CSNKA and FIBP seem mutually exclusive, CSNKB and FIBP may cooperatively interact with FGF1. Forms a ternary complex with FGFR1 and ITGAV:ITGB3 and induces the recruitment of PTPN11 to the complex. In the nucleus, phosphorylated by PKC/PRKCD.

Its subcellular location is the secreted. It localises to the cytoplasm. The protein resides in the cell cortex. The protein localises to the cytosol. It is found in the nucleus. Its function is as follows. Plays an important role in the regulation of cell survival, cell division, angiogenesis, cell differentiation and cell migration. Functions as a potent mitogen in vitro. Acts as a ligand for FGFR1 and integrins. Binds to FGFR1 in the presence of heparin leading to FGFR1 dimerization and activation via sequential autophosphorylation on tyrosine residues which act as docking sites for interacting proteins, leading to the activation of several signaling cascades. Binds to integrin ITGAV:ITGB3. Its binding to integrin, subsequent ternary complex formation with integrin and FGFR1, and the recruitment of PTPN11 to the complex are essential for FGF1 signaling. Induces the phosphorylation and activation of FGFR1, FRS2, MAPK3/ERK1, MAPK1/ERK2 and AKT1. Can induce angiogenesis. The chain is Fibroblast growth factor 1 (FGF1) from Sus scrofa (Pig).